Reading from the N-terminus, the 1051-residue chain is MAALRALLLLLAVGAQAAIRFAKEPYSQDALHGRSAILRCEVEEPAHVEFEWLQNGLPIQDTEQRFKEGSNLQFAAVDRHRDAGSFQCVARNVQTGEEARTANASFNIKWMETGSVVLKQPASAAEIQPSSTVVLRCHIDGHPRPTWQWFRDGAPLPDGRGTYSVSSKERTLTLRGAGPDDNGLYYCSARPRAVGSVCSQDNFTLNIIDESFPQAVVVPEDLIVTKNEEAMFDCQFAAVPPPTQEWLFEDSPITNRSKTTVFANGSLLITQVKARSTGVYKCIGHGQKGKALVLKATLRLAEIEEMAPFSPKVLTANQGHRVSCACPRGVPTPQVWWERNQERVPTAGRVYQEAEQLVFTSITEADAGIYTCHAANKAGEKKQELSITVATVPKWVEMPKDSQLEESKPGYLHCLSKASLKPTVTWYRNGVSISEDSRFEISENGTLRINNVEVYDGTMYKCVSSTPAGSIEGYARVHVLEKLKFTPPPQPLQCMEFNKEVTVSCSATGREKPTIQWTKTDGSSLPSHVSHRAGILSFHKVSRSDSGNYTCIASNSPQGEIRATVQLVVAVYVTFKLEPEPTTVYQGHTAMFQCQAEGDPVPHIQWKGKDKILDPSKLLPRIQIMPNGSLVIYDVTTEDSGKYTCIAGNSCNIKHREAFLYVVDKPAAEEDEGPSSHTPYKMIQTIGLSVGAAVAYIIIVLGLMFYCKKRRKAKRLKKHPEGEEPEMECLNGGTLLQNGQTTAEIQEEVALTNLGSSSGASKRHSARDKMHFPRSNLQTITTLGRGEFGEVFLAKAKGAEDAEGEALVLVKSLQTRDEQLQLDFRREAEMFGKLNHVNVVRLLGLCREAEPHYMVLEYVDLGDLKQFLRISKSKDESLKPQPLSTKHKVSLCTQVALGMEHLSNGRFVHRDLAARNCLVSAQRQVKVSALSLSKDVYNSEYYHFRQAWIPLRWMPPEAVLEDEFSTKSDVWSFGVLMWEVFTQGEMPYAPLADDEVLAGLKSGKTKLPQPEGCPSRLTKLMQRCWAPSPKDRPSFSELAAALGDSPADSKA.

The first 22 residues, methionine 1–alanine 22, serve as a signal peptide directing secretion. 7 consecutive Ig-like C2-type domains span residues lysine 23–serine 105, serine 115–threonine 204, proline 213–leucine 298, proline 308–threonine 388, proline 393–glutamate 472, proline 487–glutamine 566, and valine 573–tyrosine 661. Residues lysine 23–threonine 685 lie on the Extracellular side of the membrane. A disulfide bridge links cysteine 40 with cysteine 88. The N-linked (GlcNAc...) asparagine glycan is linked to asparagine 103. An intrachain disulfide couples cysteine 137 to cysteine 187. N-linked (GlcNAc...) asparagine glycans are attached at residues asparagine 202, asparagine 255, and asparagine 264. 5 cysteine pairs are disulfide-bonded: cysteine 234–cysteine 282, cysteine 326–cysteine 372, cysteine 414–cysteine 462, cysteine 505–cysteine 551, and cysteine 594–cysteine 645. Residues asparagine 444, asparagine 548, and asparagine 627 are each glycosylated (N-linked (GlcNAc...) asparagine). The helical transmembrane segment at isoleucine 686–tyrosine 706 threads the bilayer. The Cytoplasmic portion of the chain corresponds to cysteine 707 to alanine 1051. The region spanning leucine 777–aspartate 1048 is the Protein kinase; inactive domain.

The protein belongs to the protein kinase superfamily. Tyr protein kinase family. Insulin receptor subfamily. In terms of tissue distribution, expressed in bone marrow, spleen, bursa, thymus and brain. Weakly expressed in fibroblasts. Also expressed in embryonic liver.

The protein resides in the membrane. Its function is as follows. Inactive tyrosine kinase involved in Wnt signaling. pathway. The polypeptide is Inactive tyrosine-protein kinase 7 (PTK7) (Gallus gallus (Chicken)).